Reading from the N-terminus, the 136-residue chain is Large ribosomal subunit protein uL16 (136 aa).

It belongs to the universal ribosomal protein uL16 family. As to quaternary structure, part of the 50S ribosomal subunit.

In terms of biological role, binds 23S rRNA and is also seen to make contacts with the A and possibly P site tRNAs. In Pectobacterium atrosepticum (strain SCRI 1043 / ATCC BAA-672) (Erwinia carotovora subsp. atroseptica), this protein is Large ribosomal subunit protein uL16.